A 348-amino-acid chain; its full sequence is Dihydroorotase (348 aa).

The Zn(2+) site is built by His-13 and His-15. Residues 15–17 and Asn-41 each bind substrate; that span reads HLR. Zn(2+) contacts are provided by Lys-99, His-136, and His-174. The residue at position 99 (Lys-99) is an N6-carboxylysine. His-136 lines the substrate pocket. Position 219 (Leu-219) interacts with substrate. A Zn(2+)-binding site is contributed by Asp-247. Asp-247 is an active-site residue. His-251 and Ala-263 together coordinate substrate.

It belongs to the metallo-dependent hydrolases superfamily. DHOase family. Class II DHOase subfamily. Homodimer. Zn(2+) serves as cofactor.

It carries out the reaction (S)-dihydroorotate + H2O = N-carbamoyl-L-aspartate + H(+). It participates in pyrimidine metabolism; UMP biosynthesis via de novo pathway; (S)-dihydroorotate from bicarbonate: step 3/3. In terms of biological role, catalyzes the reversible cyclization of carbamoyl aspartate to dihydroorotate. This chain is Dihydroorotase, found in Rhizobium johnstonii (strain DSM 114642 / LMG 32736 / 3841) (Rhizobium leguminosarum bv. viciae).